Reading from the N-terminus, the 721-residue chain is uncharacterized protein (721 aa).

2 disordered regions span residues 196-291 (TSMT…VGGP) and 370-513 (AGIP…AAEQ). Low complexity-rich tracts occupy residues 202–224 (SPAG…TSGP) and 232–250 (SPFG…SSGP). Pro residues-rich tracts occupy residues 264–283 (PMPP…PPSA) and 379–389 (APTPSPAPIAP). A compositionally biased stretch (low complexity) spans 419 to 429 (APAGPLPAYGA). A compositionally biased stretch (pro residues) spans 435–446 (VTTPPATPPTPT). The segment covering 470–484 (VNKSTAPATTQAQPS) has biased composition (polar residues). Residues 491–505 (ASATAAATTGAAAGD) are compositionally biased toward low complexity.

This is an uncharacterized protein from Mycobacterium tuberculosis (strain ATCC 25618 / H37Rv).